Here is a 183-residue protein sequence, read N- to C-terminus: ATP-dependent protease subunit HslV (183 aa).

Thr-13 is a catalytic residue. 3 residues coordinate Na(+): Gly-168, Cys-171, and Thr-174.

This sequence belongs to the peptidase T1B family. HslV subfamily. In terms of assembly, a double ring-shaped homohexamer of HslV is capped on each side by a ring-shaped HslU homohexamer. The assembly of the HslU/HslV complex is dependent on binding of ATP.

Its subcellular location is the cytoplasm. It catalyses the reaction ATP-dependent cleavage of peptide bonds with broad specificity.. Allosterically activated by HslU binding. Its function is as follows. Protease subunit of a proteasome-like degradation complex believed to be a general protein degrading machinery. The sequence is that of ATP-dependent protease subunit HslV from Xanthomonas axonopodis pv. citri (strain 306).